Here is a 228-residue protein sequence, read N- to C-terminus: Clathrin light chain B (228 aa).

Met-1 bears the Blocked amino end (Met) mark. Positions 1 to 17 (MADDFGFFSSSESGAPE) are enriched in low complexity. The segment at 1–80 (MADDFGFFSS…VNGDVFQEAN (80 aa)) is disordered. Phosphoserine is present on residues Ser-11 and Ser-13. The involved in binding clathrin heavy chain stretch occupies residues 92-154 (ADRLTQEPES…QVEKNKINNR (63 aa)). At Thr-186 the chain carries Phosphothreonine. A disulfide bridge links Cys-198 with Cys-208. Lys-203 bears the N6-acetyllysine mark. Position 216 is a phosphoserine (Ser-216).

This sequence belongs to the clathrin light chain family. As to quaternary structure, clathrin coats are formed from molecules containing 3 heavy chains and 3 light chains. Interacts (via N-terminus) with HIP1. Interacts with HIP1R.

The protein localises to the cytoplasmic vesicle membrane. It is found in the membrane. Its subcellular location is the coated pit. Clathrin is the major protein of the polyhedral coat of coated pits and vesicles. The chain is Clathrin light chain B (CLTB) from Bos taurus (Bovine).